The primary structure comprises 229 residues: Dephospho-CoA kinase (229 aa).

The region spanning 3 to 203 is the DPCK domain; the sequence is TVGLTGGIGS…ARRDAKATAK (201 aa). 11 to 16 serves as a coordination point for ATP; it reads GSGKSA. The tract at residues 203 to 229 is disordered; sequence KATAKAETVASGTDTAASGTDTAAPAG.

The protein belongs to the CoaE family.

It is found in the cytoplasm. It catalyses the reaction 3'-dephospho-CoA + ATP = ADP + CoA + H(+). It functions in the pathway cofactor biosynthesis; coenzyme A biosynthesis; CoA from (R)-pantothenate: step 5/5. Its function is as follows. Catalyzes the phosphorylation of the 3'-hydroxyl group of dephosphocoenzyme A to form coenzyme A. This Frankia casuarinae (strain DSM 45818 / CECT 9043 / HFP020203 / CcI3) protein is Dephospho-CoA kinase.